A 63-amino-acid chain; its full sequence is Large ribosomal subunit protein bL28 (63 aa).

This sequence belongs to the bacterial ribosomal protein bL28 family.

This chain is Large ribosomal subunit protein bL28, found in Sulfurihydrogenibium sp. (strain YO3AOP1).